Consider the following 382-residue polypeptide: Proton extrusion protein PxcA (382 aa).

A run of 4 helical transmembrane segments spans residues 162-182 (VLLL…TYLI), 257-277 (AIKN…VCLM), 305-325 (IILF…SVLL), and 340-360 (FVNL…KYWI).

The protein belongs to the CemA family.

The protein localises to the cell inner membrane. In terms of biological role, required for H(+) efflux immediately after light irradiation to form a rapid H(+) concentration gradient across the thylakoid membranes. Together with PxcL, contributes to transient H(+) uptake following dark to light transition. In Synechococcus sp. (strain CC9605), this protein is Proton extrusion protein PxcA.